Consider the following 306-residue polypeptide: Pantothenate kinase (306 aa).

G91–S98 lines the ATP pocket.

Belongs to the prokaryotic pantothenate kinase family.

It localises to the cytoplasm. The catalysed reaction is (R)-pantothenate + ATP = (R)-4'-phosphopantothenate + ADP + H(+). Its pathway is cofactor biosynthesis; coenzyme A biosynthesis; CoA from (R)-pantothenate: step 1/5. This chain is Pantothenate kinase (coaA), found in Streptococcus pneumoniae serotype 4 (strain ATCC BAA-334 / TIGR4).